Here is a 425-residue protein sequence, read N- to C-terminus: Diacetylchitobiose binding protein DasA (425 aa).

Positions 1–20 (MKRKLIAAIGIAGMMVSIAA) are cleaved as a signal peptide. Residue Cys-21 is the site of N-palmitoyl cysteine attachment. Residue Cys-21 is the site of S-diacylglycerol cysteine attachment.

Belongs to the bacterial solute-binding protein 1 family. In terms of assembly, the complex is composed of two ATP-binding proteins (MsiK), two transmembrane proteins (DasB and DasC) and a solute-binding protein (DasA).

Its subcellular location is the cell membrane. Part of the ABC transporter complex DasABC-MsiK involved in N,N'-diacetylchitobiose ((GlcNAc)2) uptake. Binds specifically to (GlcNAc)2. Can also bind to GlcNAc, (GlcNAc)3, (GlcNAc)4 and (GlcNAc)5, but it exhibits the highest affinity for (GlcNAc)2. Involved in the control of morphological differentiation. In Streptomyces coelicolor (strain ATCC BAA-471 / A3(2) / M145), this protein is Diacetylchitobiose binding protein DasA.